The chain runs to 359 residues: Tropomodulin-1 (359 aa).

The tract at residues glutamate 36 to proline 61 is disordered. A tropomyosin-binding region spans residues proline 39–histidine 138.

This sequence belongs to the tropomodulin family. As to quaternary structure, binds to the N-terminus of tropomyosin and to actin. Interacts with FLII. Highly expressed in the erythrocyte, heart and skeletal muscle.

The protein resides in the cytoplasm. Its subcellular location is the cytoskeleton. In terms of biological role, blocks the elongation and depolymerization of the actin filaments at the pointed end. The Tmod/TM complex contributes to the formation of the short actin protofilament, which in turn defines the geometry of the membrane skeleton. The polypeptide is Tropomodulin-1 (Tmod1) (Mus musculus (Mouse)).